The chain runs to 387 residues: EARP and GARP complex-interacting protein 1 (387 aa).

Position 1 is an N-acetylmethionine (Met1). 4 WD repeats span residues 132 to 172, 180 to 222, 226 to 266, and 270 to 310; these read TAHS…SQAV, GGKG…QIYC, AHGQ…EPVK, and EHSH…SEPF. The interval 310–334 is disordered; it reads FGHLVDDDDISDQEDHRSEEKSKEP. At Ser320 the chain carries Phosphoserine. Basic and acidic residues predominate over residues 322 to 334; sequence QEDHRSEEKSKEP. Residues 345–385 form a WD 5 repeat; sequence EHEDSVYAVDWSSADPWLFASLSYDGRLVINRVPRALKYHI.

Belongs to the WD repeat EIPR1 family. Interacts with two multisubunit tethering complexes: EARP composed of VPS50, VPS51, VPS52 and VPS53 subunits and GARP complex composed of VPS51, VPS52, VPS53 and VPS54 subunits. Interacts with SNAP29.

It is found in the golgi apparatus. Its subcellular location is the trans-Golgi network. Acts as a component of endosomal retrieval machinery that is involved in protein transport from early endosomes to either recycling endosomes or the trans-Golgi network. Mediates the recruitment of Golgi-associated retrograde protein (GARP) complex to the trans-Golgi network and controls early endosome-to-Golgi transport of internalized protein. Promotes the recycling of internalized transferrin receptor (TFRC) to the plasma membrane through interaction with endosome-associated recycling protein (EARP) complex. Controls proper insulin distribution and secretion, and retention of cargo in mature dense core vesicles. Required for the stability of the endosome-associated retrograde protein (EARP) complex subunits and for proper localization and association of EARP with membranes. The chain is EARP and GARP complex-interacting protein 1 from Macaca fascicularis (Crab-eating macaque).